Here is a 347-residue protein sequence, read N- to C-terminus: tRNA N6-adenosine threonylcarbamoyltransferase (347 aa).

Residues His113 and His117 each coordinate Fe cation. Residues 136-140, Asp170, Gly183, Asp187, and Asn282 each bind substrate; that span reads IVSGG. Position 310 (Asp310) interacts with Fe cation.

Belongs to the KAE1 / TsaD family. It depends on Fe(2+) as a cofactor.

The protein resides in the cytoplasm. It catalyses the reaction L-threonylcarbamoyladenylate + adenosine(37) in tRNA = N(6)-L-threonylcarbamoyladenosine(37) in tRNA + AMP + H(+). Required for the formation of a threonylcarbamoyl group on adenosine at position 37 (t(6)A37) in tRNAs that read codons beginning with adenine. Is involved in the transfer of the threonylcarbamoyl moiety of threonylcarbamoyl-AMP (TC-AMP) to the N6 group of A37, together with TsaE and TsaB. TsaD likely plays a direct catalytic role in this reaction. This chain is tRNA N6-adenosine threonylcarbamoyltransferase, found in Bifidobacterium longum (strain NCC 2705).